A 175-amino-acid polypeptide reads, in one-letter code: Type II restriction enzyme NgoBV (175 aa).

It carries out the reaction Endonucleolytic cleavage of DNA to give specific double-stranded fragments with terminal 5'-phosphates.. Functionally, a P subtype restriction enzyme that recognizes the double-stranded sequence 5'-GGNNCC-3'; the cleavage site is unknown. In Neisseria gonorrhoeae, this protein is Type II restriction enzyme NgoBV (ngoBVR).